The following is a 398-amino-acid chain: 1,4-beta-D-glucan cellobiohydrolase CEL6C (398 aa).

The N-terminal stretch at 1–18 (MKITSSAAALALVASAVA) is a signal peptide. Asparagine 70 is a glycosylation site (N-linked (GlcNAc...) asparagine). Aspartate 125 is a catalytic residue. Aspartate 170 functions as the Proton donor in the catalytic mechanism. Tryptophan 218, tryptophan 318, lysine 346, and glutamate 350 together coordinate substrate.

Belongs to the glycosyl hydrolase 6 (cellulase B) family. In terms of processing, both N- and O-glycosylated.

It is found in the secreted. The catalysed reaction is Hydrolysis of (1-&gt;4)-beta-D-glucosidic linkages in cellulose and cellotetraose, releasing cellobiose from the non-reducing ends of the chains.. In terms of biological role, exoglucanase that plays an important function in biomass degradation by catalyzing the hydrolysis of the non-reducing end beta-1,4-glucosidic linkages in cellulose and cellotetraose to release cellobiose. Hydrolyzes crystalline and amorphous cellulose but is inactive on hydroxyethyl cellulose, mannan, galactomannan, xyloglucan, arabinoxylan, arabinan, xylan, and pectin. The polypeptide is 1,4-beta-D-glucan cellobiohydrolase CEL6C (Podospora anserina (strain S / ATCC MYA-4624 / DSM 980 / FGSC 10383) (Pleurage anserina)).